Here is a 131-residue protein sequence, read N- to C-terminus: MMNFRQRMGWIGVGLYLLASAAAFYYVFEINETYNKLALEHIQQHPQEPQEGTTWTHSLKVRLLSLPFWLWTIIFLIPYLQMFLFLYSCTRADPKTVGYCIIPICLAVICNRHQTFVKASNQISRLQLIDT.

2 helical membrane-spanning segments follow: residues 8 to 28 (MGWI…YYVF) and 66 to 86 (LPFW…FLFL).

The protein belongs to the LYSET family.

The protein resides in the golgi apparatus membrane. Required for mannose-6-phosphate-dependent trafficking of lysosomal enzymes. LYSET bridges GlcNAc-1-phosphate transferase (GNPTAB), to the membrane-bound transcription factor site-1 protease (MBTPS1), thus allowing proteolytic activation of the GNPTAB. GNPTAB is involved in the regulation of M6P-dependent Golgi-to-lysosome trafficking of lysosomal enzymes. LYSET is thus an essential factor for maturation and delivery of lysosomal hydrolases. The chain is Lysosomal enzyme trafficking factor (LYSET) from Gallus gallus (Chicken).